Reading from the N-terminus, the 323-residue chain is Cysteine synthase A (323 aa).

Asn-8 and Arg-35 together coordinate hydrogen sulfide. N6-(pyridoxal phosphate)lysine is present on Lys-42. Pyridoxal 5'-phosphate is bound by residues Asn-72 and 177–181 (GTGGT). Leu-269 contributes to the hydrogen sulfide binding site. Ser-273 contributes to the pyridoxal 5'-phosphate binding site.

It belongs to the cysteine synthase/cystathionine beta-synthase family. As to quaternary structure, homodimer. Requires pyridoxal 5'-phosphate as cofactor.

It carries out the reaction O-acetyl-L-serine + hydrogen sulfide = L-cysteine + acetate. Its pathway is amino-acid biosynthesis; L-cysteine biosynthesis; L-cysteine from L-serine: step 2/2. Two cysteine synthase enzymes are found. Both catalyze the same reaction. Cysteine synthase B can also use thiosulfate in place of sulfide to give cysteine thiosulfonate as a product. This chain is Cysteine synthase A (cysK), found in Salmonella typhi.